Consider the following 276-residue polypeptide: NADPH-dependent 7-cyano-7-deazaguanine reductase (276 aa).

83–85 serves as a coordination point for substrate; the sequence is IES. Residue 85–86 coordinates NADPH; sequence SK. Cys184 acts as the Thioimide intermediate in catalysis. The active-site Proton donor is the Asp191. 223–224 is a binding site for substrate; that stretch reads HE. 252 to 253 lines the NADPH pocket; that stretch reads RG.

The protein belongs to the GTP cyclohydrolase I family. QueF type 2 subfamily. Homodimer.

Its subcellular location is the cytoplasm. It carries out the reaction 7-aminomethyl-7-carbaguanine + 2 NADP(+) = 7-cyano-7-deazaguanine + 2 NADPH + 3 H(+). It participates in tRNA modification; tRNA-queuosine biosynthesis. Functionally, catalyzes the NADPH-dependent reduction of 7-cyano-7-deazaguanine (preQ0) to 7-aminomethyl-7-deazaguanine (preQ1). This is NADPH-dependent 7-cyano-7-deazaguanine reductase from Pseudomonas entomophila (strain L48).